Consider the following 61-residue polypeptide: Metallothionein-1F (61 aa).

At M1 the chain carries N-acetylmethionine. The beta stretch occupies residues 1-29 (MDPNCSCAAGVSCTCAGSCKCKECKCTSC). A divalent metal cation is bound by residues C5, C7, C13, C15, C19, C21, C24, C26, C29, C33, C34, C36, C37, C41, C44, C48, C50, and C57. The alpha stretch occupies residues 30–61 (KKSCCSCCPVGCSKCAQGCVCKGASEKCSCCD). A Phosphoserine modification is found at S58. The a divalent metal cation site is built by C59 and C60.

It belongs to the metallothionein superfamily. Type 1 family. As to quaternary structure, monomer.

In terms of biological role, metallothioneins have a high content of cysteine residues that bind various heavy metals; these proteins are transcriptionally regulated by both heavy metals and glucocorticoids. The sequence is that of Metallothionein-1F (MT1F) from Homo sapiens (Human).